Consider the following 421-residue polypeptide: F-box protein At2g17690 (421 aa).

Residues 2–50 form the F-box domain; that stretch reads GDWSKLPEELLGLIALRLYSVIELIRFRSICKSWRSSASGVNKNHSLSS.

Functionally, involved in heat stress response. Contributes to recovery from heat stress. The sequence is that of F-box protein At2g17690 from Arabidopsis thaliana (Mouse-ear cress).